We begin with the raw amino-acid sequence, 572 residues long: Flagellin B (572 aa).

Belongs to the bacterial flagellin family. As to quaternary structure, heteromer of flaA and flaB.

The protein resides in the secreted. It localises to the bacterial flagellum. Functionally, flagellin is the subunit protein which polymerizes to form the filaments of bacterial flagella. This Campylobacter jejuni subsp. jejuni serotype O:2 (strain ATCC 700819 / NCTC 11168) protein is Flagellin B (flaB).